A 325-amino-acid chain; its full sequence is CRISPR-associated endonuclease Cas1 3 (325 aa).

Residues Glu152, His217, and Glu232 each coordinate Mn(2+).

The protein belongs to the CRISPR-associated endonuclease Cas1 family. In terms of assembly, homodimer, forms a heterotetramer with a Cas2 homodimer. Mg(2+) is required as a cofactor. Requires Mn(2+) as cofactor.

CRISPR (clustered regularly interspaced short palindromic repeat), is an adaptive immune system that provides protection against mobile genetic elements (viruses, transposable elements and conjugative plasmids). CRISPR clusters contain spacers, sequences complementary to antecedent mobile elements, and target invading nucleic acids. CRISPR clusters are transcribed and processed into CRISPR RNA (crRNA). Acts as a dsDNA endonuclease. Involved in the integration of spacer DNA into the CRISPR cassette. The chain is CRISPR-associated endonuclease Cas1 3 from Thermodesulfovibrio yellowstonii (strain ATCC 51303 / DSM 11347 / YP87).